Consider the following 579-residue polypeptide: MDYTEKLTRYVANFVDELAKSGVTDVVVSPGSRSTPLALVFTEHPSIKEWIIVDERSAAFFALGLAKKSNRAVAIVCTSGTAAANYYPAIVEAHYSRVPLLVLTADRPHELRHIGAPQTIEQIKMYGDYTKWFHEMAMPEASDKMLHYVRNKASHAKHVAEEGNPGVVHLNFPLREPLTPNFSLDAIWGTKSYTRQNIMQEGTKQLAPNQLQILLEEVGPNKKGLFVCGPQADAEFADAVTSLAGKWGIPVVADPLSQLRTGQHHKDNVIDGYDAFLREAEIRQELKPDYIIRFGAMPVSKSYLFYVMENVETQQYVIEPNEGIRDHSSNQTTFLFADPTTLCQQLEQMTVVDQDVSTAWLKTWQEMNQIAKHYLLEGVEEQITEGEAVRGLAEVIPDGSTLYVGNSMAIRDVDTFYMTSPKTINILANRGANGIDGMVSSGVGASADNERVTLLLGDLSLFHDMNGLFAAKHYKLPITIVLINNNGGGIFSFLPQAKDKRHFEALFGTPMDLSFEQVAKLYEANYNHVKTEEQLKAALYESYQLDGLSIIEVKTDREQNVQWHQAKWQLIKEAILKDG.

The protein belongs to the TPP enzyme family. MenD subfamily. In terms of assembly, homodimer. It depends on Mg(2+) as a cofactor. The cofactor is Mn(2+). Thiamine diphosphate serves as cofactor.

It carries out the reaction isochorismate + 2-oxoglutarate + H(+) = 5-enolpyruvoyl-6-hydroxy-2-succinyl-cyclohex-3-ene-1-carboxylate + CO2. Its pathway is quinol/quinone metabolism; 1,4-dihydroxy-2-naphthoate biosynthesis; 1,4-dihydroxy-2-naphthoate from chorismate: step 2/7. It participates in quinol/quinone metabolism; menaquinone biosynthesis. Catalyzes the thiamine diphosphate-dependent decarboxylation of 2-oxoglutarate and the subsequent addition of the resulting succinic semialdehyde-thiamine pyrophosphate anion to isochorismate to yield 2-succinyl-5-enolpyruvyl-6-hydroxy-3-cyclohexene-1-carboxylate (SEPHCHC). The protein is 2-succinyl-5-enolpyruvyl-6-hydroxy-3-cyclohexene-1-carboxylate synthase of Oceanobacillus iheyensis (strain DSM 14371 / CIP 107618 / JCM 11309 / KCTC 3954 / HTE831).